The primary structure comprises 154 residues: Sec-independent protein translocase protein TatB (154 aa).

The helical transmembrane segment at 1-21 (MIDIGITKLAIIGGIALIVIG) threads the bilayer.

The protein belongs to the TatB family. In terms of assembly, the Tat system comprises two distinct complexes: a TatABC complex, containing multiple copies of TatA, TatB and TatC subunits, and a separate TatA complex, containing only TatA subunits. Substrates initially bind to the TatABC complex, which probably triggers association of the separate TatA complex to form the active translocon.

It localises to the cell inner membrane. In terms of biological role, part of the twin-arginine translocation (Tat) system that transports large folded proteins containing a characteristic twin-arginine motif in their signal peptide across membranes. Together with TatC, TatB is part of a receptor directly interacting with Tat signal peptides. TatB may form an oligomeric binding site that transiently accommodates folded Tat precursor proteins before their translocation. This Albidiferax ferrireducens (strain ATCC BAA-621 / DSM 15236 / T118) (Rhodoferax ferrireducens) protein is Sec-independent protein translocase protein TatB.